A 185-amino-acid chain; its full sequence is Threonylcarbamoyl-AMP synthase (185 aa).

The YrdC-like domain occupies 4-185 (SWRVQQAAQD…IATAQIVRAG (182 aa)).

This sequence belongs to the SUA5 family. TsaC subfamily.

Its subcellular location is the cytoplasm. It catalyses the reaction L-threonine + hydrogencarbonate + ATP = L-threonylcarbamoyladenylate + diphosphate + H2O. Required for the formation of a threonylcarbamoyl group on adenosine at position 37 (t(6)A37) in tRNAs that read codons beginning with adenine. Catalyzes the conversion of L-threonine, HCO(3)(-)/CO(2) and ATP to give threonylcarbamoyl-AMP (TC-AMP) as the acyladenylate intermediate, with the release of diphosphate. This is Threonylcarbamoyl-AMP synthase from Pseudomonas syringae pv. syringae (strain B728a).